A 261-amino-acid chain; its full sequence is Calbindin (261 aa).

N-acetylalanine is present on A2. The tract at residues 2–7 (AESHLQ) is interaction with RANBP9. 5 EF-hand domains span residues 11–46 (ITAS…LQQA), 53–88 (ELSP…EENF), 98–133 (KSCE…LLEK), 142–177 (KLAE…QENF), and 186–221 (MCGK…LCEK). 5 residues coordinate Ca(2+): D24, D26, S28, Y30, and E35. D111, D113, E122, D155, N157, D159, K161, E166, D199, D201, N203, Y205, and E210 together coordinate Ca(2+).

The protein belongs to the calbindin family. As to quaternary structure, interacts with RANBP9.

Buffers cytosolic calcium. May stimulate a membrane Ca(2+)-ATPase and a 3',5'-cyclic nucleotide phosphodiesterase. This chain is Calbindin (CALB1), found in Pongo abelii (Sumatran orangutan).